The chain runs to 130 residues: Small ribosomal subunit protein uS11 (130 aa).

It belongs to the universal ribosomal protein uS11 family. In terms of assembly, part of the 30S ribosomal subunit. Interacts with proteins S7 and S18. Binds to IF-3.

Its function is as follows. Located on the platform of the 30S subunit, it bridges several disparate RNA helices of the 16S rRNA. Forms part of the Shine-Dalgarno cleft in the 70S ribosome. The sequence is that of Small ribosomal subunit protein uS11 from Synechococcus sp. (strain CC9605).